The following is a 255-amino-acid chain: Hydroxyacylglutathione hydrolase (255 aa).

Zn(2+)-binding residues include His-55, His-57, Asp-59, His-60, His-113, Asp-132, and His-170.

This sequence belongs to the metallo-beta-lactamase superfamily. Glyoxalase II family. Monomer. Requires Zn(2+) as cofactor.

It catalyses the reaction an S-(2-hydroxyacyl)glutathione + H2O = a 2-hydroxy carboxylate + glutathione + H(+). It functions in the pathway secondary metabolite metabolism; methylglyoxal degradation; (R)-lactate from methylglyoxal: step 2/2. Thiolesterase that catalyzes the hydrolysis of S-D-lactoyl-glutathione to form glutathione and D-lactic acid. The sequence is that of Hydroxyacylglutathione hydrolase from Methylobacterium nodulans (strain LMG 21967 / CNCM I-2342 / ORS 2060).